A 208-amino-acid polypeptide reads, in one-letter code: Large ribosomal subunit protein uL3 (208 aa).

Gln149 bears the N5-methylglutamine mark.

This sequence belongs to the universal ribosomal protein uL3 family. As to quaternary structure, part of the 50S ribosomal subunit. Forms a cluster with proteins L14 and L19. Post-translationally, methylated by PrmB.

One of the primary rRNA binding proteins, it binds directly near the 3'-end of the 23S rRNA, where it nucleates assembly of the 50S subunit. The polypeptide is Large ribosomal subunit protein uL3 (Histophilus somni (strain 129Pt) (Haemophilus somnus)).